Reading from the N-terminus, the 1028-residue chain is Pro-apoptotic serine protease nma111 (1028 aa).

Residues methionine 1–valine 46 form a disordered region. A serine protease region spans residues valine 82–aspartate 266. Residues histidine 120, aspartate 151, and serine 233 each act as charge relay system in the active site. PDZ domains are found at residues proline 305 to glycine 377 and valine 876 to aspartate 957. Residues threonine 989–aspartate 1028 are disordered. The span at valine 990–isoleucine 1001 shows a compositional bias: basic and acidic residues. The span at alanine 1012–aspartate 1028 shows a compositional bias: acidic residues.

It belongs to the peptidase S1C family.

It is found in the nucleus. In terms of biological role, nuclear serine protease which mediates apoptosis. The sequence is that of Pro-apoptotic serine protease nma111 (nma111) from Neosartorya fischeri (strain ATCC 1020 / DSM 3700 / CBS 544.65 / FGSC A1164 / JCM 1740 / NRRL 181 / WB 181) (Aspergillus fischerianus).